We begin with the raw amino-acid sequence, 336 residues long: Glycerol-3-phosphate dehydrogenase [NAD(P)+] (336 aa).

Residues S16, Y17, H37, and K111 each coordinate NADPH. The sn-glycerol 3-phosphate site is built by K111, G140, and T142. A144 contacts NADPH. Residues K196, D249, S259, R260, and N261 each contribute to the sn-glycerol 3-phosphate site. Catalysis depends on K196, which acts as the Proton acceptor. R260 serves as a coordination point for NADPH. V284 and E286 together coordinate NADPH.

The protein belongs to the NAD-dependent glycerol-3-phosphate dehydrogenase family.

Its subcellular location is the cytoplasm. It carries out the reaction sn-glycerol 3-phosphate + NAD(+) = dihydroxyacetone phosphate + NADH + H(+). It catalyses the reaction sn-glycerol 3-phosphate + NADP(+) = dihydroxyacetone phosphate + NADPH + H(+). The protein operates within membrane lipid metabolism; glycerophospholipid metabolism. In terms of biological role, catalyzes the reduction of the glycolytic intermediate dihydroxyacetone phosphate (DHAP) to sn-glycerol 3-phosphate (G3P), the key precursor for phospholipid synthesis. The chain is Glycerol-3-phosphate dehydrogenase [NAD(P)+] from Glaesserella parasuis serovar 5 (strain SH0165) (Haemophilus parasuis).